The chain runs to 385 residues: Flap endonuclease 1 (385 aa).

Residues 1-105 (MGIKGLNAII…HELSKRSARR (105 aa)) form an N-domain region. D34 lines the Mg(2+) pocket. Residues R47 and R71 each contribute to the DNA site. D87, E156, E158, D177, and D179 together coordinate Mg(2+). The tract at residues 120-251 (EKLKHERRLV…VTALKLIKEH (132 aa)) is I-domain. E156 provides a ligand contact to DNA. DNA contacts are provided by G229 and D231. D231 is a binding site for Mg(2+). An interaction with PCNA region spans residues 338 to 346 (VQGRLDGFF). A compositionally biased stretch (low complexity) spans 356–370 (LAAANAKAKSTKAGK). The disordered stretch occupies residues 356 to 385 (LAAANAKAKSTKAGKQATKGKVGKPGRPRK). Residues 376–385 (KVGKPGRPRK) show a composition bias toward basic residues.

This sequence belongs to the XPG/RAD2 endonuclease family. FEN1 subfamily. In terms of assembly, interacts with PCNA. Three molecules of FEN1 bind to one PCNA trimer with each molecule binding to one PCNA monomer. PCNA stimulates the nuclease activity without altering cleavage specificity. Mg(2+) serves as cofactor. Phosphorylated. Phosphorylation upon DNA damage induces relocalization to the nuclear plasma.

The protein resides in the nucleus. Its subcellular location is the nucleolus. The protein localises to the nucleoplasm. It localises to the mitochondrion. Functionally, structure-specific nuclease with 5'-flap endonuclease and 5'-3' exonuclease activities involved in DNA replication and repair. During DNA replication, cleaves the 5'-overhanging flap structure that is generated by displacement synthesis when DNA polymerase encounters the 5'-end of a downstream Okazaki fragment. It enters the flap from the 5'-end and then tracks to cleave the flap base, leaving a nick for ligation. Also involved in the long patch base excision repair (LP-BER) pathway, by cleaving within the apurinic/apyrimidinic (AP) site-terminated flap. Acts as a genome stabilization factor that prevents flaps from equilibrating into structures that lead to duplications and deletions. Also possesses 5'-3' exonuclease activity on nicked or gapped double-stranded DNA, and exhibits RNase H activity. Also involved in replication and repair of rDNA and in repairing mitochondrial DNA. In Lachancea thermotolerans (strain ATCC 56472 / CBS 6340 / NRRL Y-8284) (Yeast), this protein is Flap endonuclease 1.